The chain runs to 65 residues: METVTVLRKKGKTYLIVSVNGFLTVTDCKSLNKLQKELLRQAYRKTKNEEEKALINVCLQSRLNR.

This is an uncharacterized protein from Acidianus filamentous virus 1 (isolate United States/Yellowstone) (AFV-1).